The chain runs to 288 residues: UDP-3-O-acyl-N-acetylglucosamine deacetylase (288 aa).

The Zn(2+) site is built by H79, H236, and D240. The active-site Proton donor is H263.

It belongs to the LpxC family. Zn(2+) serves as cofactor.

The catalysed reaction is a UDP-3-O-[(3R)-3-hydroxyacyl]-N-acetyl-alpha-D-glucosamine + H2O = a UDP-3-O-[(3R)-3-hydroxyacyl]-alpha-D-glucosamine + acetate. Its pathway is glycolipid biosynthesis; lipid IV(A) biosynthesis; lipid IV(A) from (3R)-3-hydroxytetradecanoyl-[acyl-carrier-protein] and UDP-N-acetyl-alpha-D-glucosamine: step 2/6. Functionally, catalyzes the hydrolysis of UDP-3-O-myristoyl-N-acetylglucosamine to form UDP-3-O-myristoylglucosamine and acetate, the committed step in lipid A biosynthesis. The sequence is that of UDP-3-O-acyl-N-acetylglucosamine deacetylase from Rickettsia prowazekii (strain Madrid E).